The following is a 990-amino-acid chain: Importin beta-like protein kap111 (990 aa).

Belongs to the importin beta family.

The protein resides in the nucleus. In terms of biological role, functions as a component of the nuclear pore complex (NPC). NPC components, collectively referred to as nucleoporins (NUPs), can play the role of both NPC structural components and of docking or interaction partners for transiently associated nuclear transport factors. Active directional transport is assured by both, a Phe-Gly (FG) repeat affinity gradient for these transport factors across the NPC and a transport cofactor concentration gradient across the nuclear envelope. This Schizosaccharomyces pombe (strain 972 / ATCC 24843) (Fission yeast) protein is Importin beta-like protein kap111 (kap111).